The sequence spans 399 residues: Nicotinate phosphoribosyltransferase (399 aa).

At His-217 the chain carries Phosphohistidine; by autocatalysis.

This sequence belongs to the NAPRTase family. Transiently phosphorylated on a His residue during the reaction cycle. Phosphorylation strongly increases the affinity for substrates and increases the rate of nicotinate D-ribonucleotide production. Dephosphorylation regenerates the low-affinity form of the enzyme, leading to product release.

It carries out the reaction nicotinate + 5-phospho-alpha-D-ribose 1-diphosphate + ATP + H2O = nicotinate beta-D-ribonucleotide + ADP + phosphate + diphosphate. Its pathway is cofactor biosynthesis; NAD(+) biosynthesis; nicotinate D-ribonucleotide from nicotinate: step 1/1. Catalyzes the synthesis of beta-nicotinate D-ribonucleotide from nicotinate and 5-phospho-D-ribose 1-phosphate at the expense of ATP. In Burkholderia cenocepacia (strain HI2424), this protein is Nicotinate phosphoribosyltransferase.